The chain runs to 85 residues: Cell division topological specificity factor (85 aa).

This sequence belongs to the MinE family.

Functionally, prevents the cell division inhibition by proteins MinC and MinD at internal division sites while permitting inhibition at polar sites. This ensures cell division at the proper site by restricting the formation of a division septum at the midpoint of the long axis of the cell. The polypeptide is Cell division topological specificity factor (Shewanella sp. (strain ANA-3)).